Consider the following 284-residue polypeptide: NAD kinase (284 aa).

The Proton acceptor role is filled by D71. NAD(+) is bound by residues 71–72 (DG), 144–145 (ND), D174, 185–190 (TAYNLS), and Q242.

This sequence belongs to the NAD kinase family. A divalent metal cation serves as cofactor.

Its subcellular location is the cytoplasm. The catalysed reaction is NAD(+) + ATP = ADP + NADP(+) + H(+). In terms of biological role, involved in the regulation of the intracellular balance of NAD and NADP, and is a key enzyme in the biosynthesis of NADP. Catalyzes specifically the phosphorylation on 2'-hydroxyl of the adenosine moiety of NAD to yield NADP. The sequence is that of NAD kinase from Sulfurimonas denitrificans (strain ATCC 33889 / DSM 1251) (Thiomicrospira denitrificans (strain ATCC 33889 / DSM 1251)).